A 149-amino-acid polypeptide reads, in one-letter code: uncharacterized protein (149 aa).

This is an uncharacterized protein from Saccharomyces cerevisiae (strain ATCC 204508 / S288c) (Baker's yeast).